The sequence spans 429 residues: MSTLVVLGTQWGDEGKGKVIHYLAKQADYIVRYQGGNNAGHTLIHENKPFILHLIPSGILFPDKYCLITNGVVVDPKALKEEIAILDKNNISVEKRFFISEQAHIILPYHKLIDGILEEENVKIGTTRRGIGPAYADKVKRIGIRVVDYLEKDVFEDLLEKNLIEKTPILKNSGVDIANLKEEILKDREELSIFLEPFVTDTSIMIANAIKKNKKILFESAQGTMLDLDFGTYPFVTSSNPIAGGVCSGAGVGPTKIDSVLGVVKAYTTRVGEGPFTVELFDEMGKFLREKGAEYGATTGRPRRCGWFDAVVVRHSVRLSGIKHLILTKLDCVEDIDKIKICVAYKYKDKLYKEFPASRTVQKYAEPVYEEMPGFKGKVKGIIDFEKLPLNAQKYVKRLEQLVDAPIDLISLGRKREETIEVRKGVNWF.

Residues 12–18 (GDEGKGK) and 40–42 (GHT) contribute to the GTP site. Catalysis depends on Asp13, which acts as the Proton acceptor. Residues Asp13 and Gly40 each contribute to the Mg(2+) site. Residues 13 to 16 (DEGK), 38 to 41 (NAGH), Thr127, Arg141, Gln222, Thr237, and Arg301 each bind IMP. His41 acts as the Proton donor in catalysis. Position 297–303 (297–303 (ATTGRPR)) interacts with substrate. GTP is bound by residues Arg303, 329–331 (KLD), and 411–413 (SLG).

It belongs to the adenylosuccinate synthetase family. Homodimer. Mg(2+) is required as a cofactor.

The protein resides in the cytoplasm. It carries out the reaction IMP + L-aspartate + GTP = N(6)-(1,2-dicarboxyethyl)-AMP + GDP + phosphate + 2 H(+). The protein operates within purine metabolism; AMP biosynthesis via de novo pathway; AMP from IMP: step 1/2. In terms of biological role, plays an important role in the de novo pathway of purine nucleotide biosynthesis. Catalyzes the first committed step in the biosynthesis of AMP from IMP. The chain is Adenylosuccinate synthetase from Endomicrobium trichonymphae.